The following is a 727-amino-acid chain: MHPSTFQTELNPHTSTLLKKLTHHSQQRNLVAGRAVHGQIIRTGASTCIQHANVLVNFYAKCGKLAKAHSIFNAIICKDVVSWNSLITGYSQNGGISSSYTVMQLFREMRAQDILPNAYTLAGIFKAESSLQSSTVGRQAHALVVKMSSFGDIYVDTSLVGMYCKAGLVEDGLKVFAYMPERNTYTWSTMVSGYATRGRVEEAIKVFNLFLREKEEGSDSDYVFTAVLSSLAATIYVGLGRQIHCITIKNGLLGFVALSNALVTMYSKCESLNEACKMFDSSGDRNSITWSAMVTGYSQNGESLEAVKLFSRMFSAGIKPSEYTIVGVLNACSDICYLEEGKQLHSFLLKLGFERHLFATTALVDMYAKAGCLADARKGFDCLQERDVALWTSLISGYVQNSDNEEALILYRRMKTAGIIPNDPTMASVLKACSSLATLELGKQVHGHTIKHGFGLEVPIGSALSTMYSKCGSLEDGNLVFRRTPNKDVVSWNAMISGLSHNGQGDEALELFEEMLAEGMEPDDVTFVNIISACSHKGFVERGWFYFNMMSDQIGLDPKVDHYACMVDLLSRAGQLKEAKEFIESANIDHGLCLWRILLSACKNHGKCELGVYAGEKLMALGSRESSTYVQLSGIYTALGRMRDVERVWKHMRANGVSKEVGCSWIELKNQYHVFVVGDTMHPMIEETKDLVCLVSRQMIEEGFVTVLDSSFVEEEEGTQLSTSFII.

17 PPR repeats span residues 13-47, 48-78, 79-116, 117-150, 152-182, 183-213, 220-254, 255-285, 286-320, 321-355, 356-386, 387-421, 422-456, 457-487, 488-522, 523-553, and 559-593; these read HTST…GAST, CIQH…IICK, DVVS…DILP, NAYT…MSSF, DIYV…MPER, NTYT…FLRE, SDYV…GLLG, FVAL…SGDR, NSIT…GIKP, SEYT…GFER, HLFA…LQER, DVAL…GIIP, NDPT…GFGL, EVPI…TPNK, DVVS…GMEP, DDVT…MSDQ, and KVDH…HGLC. Positions 594 to 669 are type E motif; that stretch reads LWRILLSACK…EVGCSWIELK (76 aa). The type E(+) motif stretch occupies residues 670-700; sequence NQYHVFVVGDTMHPMIEETKDLVCLVSRQMI.

It belongs to the PPR family. PCMP-E subfamily.

The polypeptide is Pentatricopeptide repeat-containing protein At2g33680 (PCMP-E19) (Arabidopsis thaliana (Mouse-ear cress)).